Here is a 1380-residue protein sequence, read N- to C-terminus: DNA-directed RNA polymerase subunit beta (1380 aa).

This sequence belongs to the RNA polymerase beta chain family. In terms of assembly, the RNAP catalytic core consists of 2 alpha, 1 beta, 1 beta' and 1 omega subunit. When a sigma factor is associated with the core the holoenzyme is formed, which can initiate transcription.

It catalyses the reaction RNA(n) + a ribonucleoside 5'-triphosphate = RNA(n+1) + diphosphate. DNA-dependent RNA polymerase catalyzes the transcription of DNA into RNA using the four ribonucleoside triphosphates as substrates. This Nitrobacter winogradskyi (strain ATCC 25391 / DSM 10237 / CIP 104748 / NCIMB 11846 / Nb-255) protein is DNA-directed RNA polymerase subunit beta.